Here is a 245-residue protein sequence, read N- to C-terminus: UPF0246 protein cgR_1824 (245 aa).

The protein belongs to the UPF0246 family.

The protein is UPF0246 protein cgR_1824 of Corynebacterium glutamicum (strain R).